We begin with the raw amino-acid sequence, 1079 residues long: Integrator complex subunit 3 homolog (1079 aa).

Disordered stretches follow at residues 544-574, 925-949, and 1010-1079; these read ETEA…DDLP, YPSS…TPSA, and AVGR…NDSD. Positions 938 to 949 are enriched in low complexity; that stretch reads KGSSAASSTPSA. Phosphoserine occurs at positions 1049, 1050, 1054, and 1055. The segment covering 1062–1073 has biased composition (basic residues); sequence HKITQAAKKRKK.

This sequence belongs to the Integrator subunit 3 family. Belongs to the multiprotein complex Integrator, at least composed of IntS1, IntS2, IntS3, IntS4, omd/IntS5, IntS6, defl/IntS7, IntS8, IntS9, IntS10, IntS11, IntS12, asun/IntS13, IntS14 and IntS15. The core complex associates with protein phosphatase 2A subunits mts/PP2A and Pp2A-29B, to form the Integrator-PP2A (INTAC) complex.

It localises to the nucleus. Its subcellular location is the cytoplasm. Its function is as follows. Component of the integrator complex, a multiprotein complex that terminates RNA polymerase II (Pol II) transcription in the promoter-proximal region of genes. The integrator complex provides a quality checkpoint during transcription elongation by driving premature transcription termination of transcripts that are unfavorably configured for transcriptional elongation: the complex terminates transcription by (1) catalyzing dephosphorylation of the C-terminal domain (CTD) of Pol II subunit Polr2A/Rbp1 and Spt5, and (2) degrading the exiting nascent RNA transcript via endonuclease activity. The integrator complex is also involved in the 3'-end processing of the U7 snRNA, and also the spliceosomal snRNAs U1, U2, U4 and U5. This is Integrator complex subunit 3 homolog (IntS3) from Drosophila mojavensis (Fruit fly).